The following is an 85-amino-acid chain: Small ribosomal subunit protein bS20 (85 aa).

A disordered region spans residues 1–22 (MANIKSAIKRAKLSEERRAHNA).

The protein belongs to the bacterial ribosomal protein bS20 family.

Its function is as follows. Binds directly to 16S ribosomal RNA. The chain is Small ribosomal subunit protein bS20 from Bacillus cytotoxicus (strain DSM 22905 / CIP 110041 / 391-98 / NVH 391-98).